The chain runs to 142 residues: Hemoglobin subunit alpha (142 aa).

Position 1 is an N-acetylserine (Ser1). The Globin domain maps to 1 to 142 (SLSDKDKAAV…VALALAERYR (142 aa)). Residue His59 coordinates O2. His88 is a binding site for heme b.

The protein belongs to the globin family. As to quaternary structure, hb1 is a heterotetramer of two alpha chains and two beta chains. HbC is a heterotetramer of two alpha chains and two beta-C chains. As to expression, red blood cells.

Functionally, involved in oxygen transport from gills to the various peripheral tissues. The sequence is that of Hemoglobin subunit alpha (hba) from Trematomus bernacchii (Emerald rockcod).